Here is a 167-residue protein sequence, read N- to C-terminus: MAPVTLSTVDDDLKEVIQHLFEIQSAVHGYLGPETQQELVRKIKNLTLALSTLSTHTKPHPPPPPPPQPTDPTTAAAPALRDNPDPPLSSIQLPPEIIDYVDAARNPDIYTREFVELVQRGNQDLKGKKEAFASFRDVLAREMRSAMPECRGEVERVLEGTGGKRER.

Residues 54–92 form a disordered region; sequence STHTKPHPPPPPPPQPTDPTTAAAPALRDNPDPPLSSIQ. Positions 60–70 are enriched in pro residues; the sequence is HPPPPPPPQPT.

It belongs to the Mediator complex subunit 10 family. In terms of assembly, component of the Mediator complex.

Its subcellular location is the nucleus. Component of the Mediator complex, a coactivator involved in the regulated transcription of nearly all RNA polymerase II-dependent genes. Mediator functions as a bridge to convey information from gene-specific regulatory proteins to the basal RNA polymerase II transcription machinery. Mediator is recruited to promoters by direct interactions with regulatory proteins and serves as a scaffold for the assembly of a functional preinitiation complex with RNA polymerase II and the general transcription factors. This Aspergillus clavatus (strain ATCC 1007 / CBS 513.65 / DSM 816 / NCTC 3887 / NRRL 1 / QM 1276 / 107) protein is Mediator of RNA polymerase II transcription subunit 10 (nut2).